Consider the following 240-residue polypeptide: Uridylate kinase (240 aa).

ATP-binding positions include Lys15–Gly18, Gly58, and Arg62. UMP contacts are provided by residues Asp77 and Thr138–Thr145. Thr165, Tyr171, and Asp174 together coordinate ATP.

The protein belongs to the UMP kinase family. In terms of assembly, homohexamer.

The protein localises to the cytoplasm. The enzyme catalyses UMP + ATP = UDP + ADP. The protein operates within pyrimidine metabolism; CTP biosynthesis via de novo pathway; UDP from UMP (UMPK route): step 1/1. With respect to regulation, inhibited by UTP. In terms of biological role, catalyzes the reversible phosphorylation of UMP to UDP. In Buchnera aphidicola subsp. Schizaphis graminum (strain Sg), this protein is Uridylate kinase.